The following is a 39-amino-acid chain: Cytochrome b559 subunit beta (39 aa).

The helical transmembrane segment at 14 to 30 threads the bilayer; the sequence is WLAIHGLAVPTVFFLGS. Histidine 18 lines the heme pocket.

It belongs to the PsbE/PsbF family. Heterodimer of an alpha subunit and a beta subunit. PSII is composed of 1 copy each of membrane proteins PsbA, PsbB, PsbC, PsbD, PsbE, PsbF, PsbH, PsbI, PsbJ, PsbK, PsbL, PsbM, PsbT, PsbX, PsbY, PsbZ, Psb30/Ycf12, at least 3 peripheral proteins of the oxygen-evolving complex and a large number of cofactors. It forms dimeric complexes. Heme b serves as cofactor.

It localises to the plastid. The protein resides in the chloroplast thylakoid membrane. In terms of biological role, this b-type cytochrome is tightly associated with the reaction center of photosystem II (PSII). PSII is a light-driven water:plastoquinone oxidoreductase that uses light energy to abstract electrons from H(2)O, generating O(2) and a proton gradient subsequently used for ATP formation. It consists of a core antenna complex that captures photons, and an electron transfer chain that converts photonic excitation into a charge separation. The polypeptide is Cytochrome b559 subunit beta (Psilotum nudum (Whisk fern)).